A 54-amino-acid chain; its full sequence is Photosystem II reaction center protein L (54 aa).

Residues 33-53 traverse the membrane as a helical segment; the sequence is SLFWGLLLIFVLAVLFSSYIF.

It belongs to the PsbL family. In terms of assembly, PSII is composed of 1 copy each of membrane proteins PsbA, PsbB, PsbC, PsbD, PsbE, PsbF, PsbH, PsbI, PsbJ, PsbK, PsbL, PsbM, PsbT, PsbX, PsbY, PsbZ, Psb30/Ycf12, at least 3 peripheral proteins of the oxygen-evolving complex and a large number of cofactors. It forms dimeric complexes.

Its subcellular location is the plastid. The protein localises to the chloroplast thylakoid membrane. In terms of biological role, one of the components of the core complex of photosystem II (PSII). PSII is a light-driven water:plastoquinone oxidoreductase that uses light energy to abstract electrons from H(2)O, generating O(2) and a proton gradient subsequently used for ATP formation. It consists of a core antenna complex that captures photons, and an electron transfer chain that converts photonic excitation into a charge separation. This subunit is found at the monomer-monomer interface and is required for correct PSII assembly and/or dimerization. In Stigeoclonium helveticum (Green alga), this protein is Photosystem II reaction center protein L.